A 1037-amino-acid chain; its full sequence is Presequence protease, mitochondrial (1037 aa).

The N-terminal 15 residues, 1-15 (MWRCGGRQGLGVLRR), are a transit peptide targeting the mitochondrion. A Zn(2+)-binding site is contributed by His104. Glu107 acts as the Proton acceptor in catalysis. His108 and Glu205 together coordinate Zn(2+). Cys119 and Cys556 are joined by a disulfide. Lys759 is modified (N6-acetyllysine). The residue at position 770 (Lys770) is an N6-acetyllysine; alternate. An N6-succinyllysine; alternate modification is found at Lys770. Residues 803-834 (IGRSKKERRPVRPHTVEKPVPSSSGGDAHVPH) are disordered. The segment covering 804-814 (GRSKKERRPVR) has biased composition (basic residues). At Lys849 the chain carries N6-succinyllysine. Lys884 carries the post-translational modification N6-acetyllysine. Position 946 is an N6-succinyllysine (Lys946).

The protein belongs to the peptidase M16 family. PreP subfamily. In terms of assembly, monomer and homodimer; homodimerization is induced by binding of the substrate. The cofactor is Zn(2+). A disulfide bond locks the enzyme in the closed conformation preventing substrate entry into the catalytic chamber.

The protein resides in the mitochondrion matrix. Its activity is regulated as follows. Mainly exists in a closed and catalytically competent conformation but a closed-to-open switch allows substrate entry into the catalytic chamber. Substrate binding induces closure and dimerization. A disulfide bond may lock the enzyme in a closed conformation preventing substrate entry into the catalytic chamber, participating in redox regulation of the enzyme. Inhibited by metal-chelating agents. Inhibited by nickel and zinc excess, and slightly activated by manganese. Functionally, metalloendopeptidase of the mitochondrial matrix that functions in peptide cleavage and degradation rather than in protein processing. Has an ATP-independent activity. Specifically cleaves peptides in the range of 5 to 65 residues. Shows a preference for cleavage after small polar residues and before basic residues, but without any positional preference. Degrades the transit peptides of mitochondrial proteins after their cleavage. Also degrades other unstructured peptides. It is also able to degrade amyloid-beta protein 40, one of the peptides produced by APP processing, when it accumulates in mitochondrion. It is a highly efficient protease, at least toward amyloid-beta protein 40. Cleaves that peptide at a specific position and is probably not processive, releasing digested peptides intermediates that can be further cleaved subsequently. It is also able to degrade amyloid-beta protein 42. The polypeptide is Presequence protease, mitochondrial (Pongo abelii (Sumatran orangutan)).